A 301-amino-acid chain; its full sequence is MEIPDFSSMKLDSRPELIDFEGVSMTRYFTDNWEKVKNFQARPDDILIATYPKAGTTWVSYILDLLYFGNESPERQTSQPIYMRVPFLEMCFQGLPLGTELADTLPTSPRPIKTHLPVQLVPKSFWEQNSKVVYVARNAKDNAVSYFHFDRMNMGQPEPGDWNTFLQKFMDGRNVFGPWYDHVNGYWKKKQTYSNILYMFYEDMVEDTGREVARLCSFLGLSTSATERERITKGVQFDVMKQNKMTNYSTLPVMDFKISPFMRKGKVGDWRNHFTVAQNEQFDEVYKQKMKNTTVKFRTEI.

53 to 58 (KAGTTW) provides a ligand contact to 3'-phosphoadenylyl sulfate. The active-site Proton acceptor is the His115. Residues Arg137, Ser145, Tyr201, 235-240 (VQFDVM), and 263-265 (RKG) contribute to the 3'-phosphoadenylyl sulfate site.

This sequence belongs to the sulfotransferase 1 family. As to expression, expressed in liver.

The protein localises to the cytoplasm. Its activity is regulated as follows. Inhibited by Co(2+), Zn(2+), Cd(2+) and Pb(2+) ions. Inactivated by Hg(2+) and Cu(2+) ions. Its function is as follows. Sulfotransferase that utilizes 3'-phospho-5'-adenylyl sulfate (PAPS) as sulfonate donor to catalyze the sulfate conjugation of a variety of xenobiotic and endogenous compounds, including 2-naphthol, hydroxychlorobiphenyls, T3 (triiodo-L-thyronine), T4 (thyroxine), estrone and DOPA. In Danio rerio (Zebrafish), this protein is Cytosolic sulfotransferase 2.